The following is a 401-amino-acid chain: Tyrosine--tRNA ligase (401 aa).

A 'HIGH' region motif is present at residues proline 42–histidine 51. The 'KMSKS' region signature appears at lysine 226–serine 230. Lysine 229 is a binding site for ATP. The region spanning isoleucine 336–isoleucine 397 is the S4 RNA-binding domain.

The protein belongs to the class-I aminoacyl-tRNA synthetase family. TyrS type 2 subfamily. In terms of assembly, homodimer.

The protein resides in the cytoplasm. It carries out the reaction tRNA(Tyr) + L-tyrosine + ATP = L-tyrosyl-tRNA(Tyr) + AMP + diphosphate + H(+). In terms of biological role, catalyzes the attachment of tyrosine to tRNA(Tyr) in a two-step reaction: tyrosine is first activated by ATP to form Tyr-AMP and then transferred to the acceptor end of tRNA(Tyr). This chain is Tyrosine--tRNA ligase, found in Legionella pneumophila (strain Lens).